The chain runs to 243 residues: 1-(5-phosphoribosyl)-5-[(5-phosphoribosylamino)methylideneamino] imidazole-4-carboxamide isomerase (243 aa).

Residue Asp-8 is the Proton acceptor of the active site. Asp-130 (proton donor) is an active-site residue.

This sequence belongs to the HisA/HisF family.

The protein resides in the cytoplasm. It carries out the reaction 1-(5-phospho-beta-D-ribosyl)-5-[(5-phospho-beta-D-ribosylamino)methylideneamino]imidazole-4-carboxamide = 5-[(5-phospho-1-deoxy-D-ribulos-1-ylimino)methylamino]-1-(5-phospho-beta-D-ribosyl)imidazole-4-carboxamide. The protein operates within amino-acid biosynthesis; L-histidine biosynthesis; L-histidine from 5-phospho-alpha-D-ribose 1-diphosphate: step 4/9. This is 1-(5-phosphoribosyl)-5-[(5-phosphoribosylamino)methylideneamino] imidazole-4-carboxamide isomerase from Vesicomyosocius okutanii subsp. Calyptogena okutanii (strain HA).